The primary structure comprises 116 residues: Iron-sulfur cluster insertion protein ErpA (116 aa).

The iron-sulfur cluster site is built by cysteine 44, cysteine 108, and cysteine 110.

The protein belongs to the HesB/IscA family. As to quaternary structure, homodimer. Requires iron-sulfur cluster as cofactor.

Required for insertion of 4Fe-4S clusters for at least IspG. The polypeptide is Iron-sulfur cluster insertion protein ErpA (Francisella tularensis subsp. mediasiatica (strain FSC147)).